The following is a 195-amino-acid chain: Peptidyl-tRNA hydrolase (195 aa).

Residue Tyr17 participates in tRNA binding. Residue His22 is the Proton acceptor of the active site. Residues Phe68, Asn70, and Asn116 each coordinate tRNA.

It belongs to the PTH family. As to quaternary structure, monomer.

Its subcellular location is the cytoplasm. The enzyme catalyses an N-acyl-L-alpha-aminoacyl-tRNA + H2O = an N-acyl-L-amino acid + a tRNA + H(+). In terms of biological role, hydrolyzes ribosome-free peptidyl-tRNAs (with 1 or more amino acids incorporated), which drop off the ribosome during protein synthesis, or as a result of ribosome stalling. Functionally, catalyzes the release of premature peptidyl moieties from peptidyl-tRNA molecules trapped in stalled 50S ribosomal subunits, and thus maintains levels of free tRNAs and 50S ribosomes. The protein is Peptidyl-tRNA hydrolase of Shewanella amazonensis (strain ATCC BAA-1098 / SB2B).